A 232-amino-acid chain; its full sequence is Phosphatidylserine decarboxylase proenzyme (232 aa).

Serine 190 functions as the Schiff-base intermediate with substrate; via pyruvic acid in the catalytic mechanism. The residue at position 190 (serine 190) is a Pyruvic acid (Ser); by autocatalysis.

It belongs to the phosphatidylserine decarboxylase family. PSD-A subfamily. In terms of assembly, heterodimer of a large membrane-associated beta subunit and a small pyruvoyl-containing alpha subunit. It depends on pyruvate as a cofactor. Post-translationally, is synthesized initially as an inactive proenzyme. Formation of the active enzyme involves a self-maturation process in which the active site pyruvoyl group is generated from an internal serine residue via an autocatalytic post-translational modification. Two non-identical subunits are generated from the proenzyme in this reaction, and the pyruvate is formed at the N-terminus of the alpha chain, which is derived from the carboxyl end of the proenzyme. The post-translation cleavage follows an unusual pathway, termed non-hydrolytic serinolysis, in which the side chain hydroxyl group of the serine supplies its oxygen atom to form the C-terminus of the beta chain, while the remainder of the serine residue undergoes an oxidative deamination to produce ammonia and the pyruvoyl prosthetic group on the alpha chain.

It is found in the cell membrane. It carries out the reaction a 1,2-diacyl-sn-glycero-3-phospho-L-serine + H(+) = a 1,2-diacyl-sn-glycero-3-phosphoethanolamine + CO2. It participates in phospholipid metabolism; phosphatidylethanolamine biosynthesis; phosphatidylethanolamine from CDP-diacylglycerol: step 2/2. Functionally, catalyzes the formation of phosphatidylethanolamine (PtdEtn) from phosphatidylserine (PtdSer). This is Phosphatidylserine decarboxylase proenzyme from Bradyrhizobium diazoefficiens (strain JCM 10833 / BCRC 13528 / IAM 13628 / NBRC 14792 / USDA 110).